A 366-amino-acid chain; its full sequence is 3-dehydroquinate synthase (366 aa).

Residues 107–111, 131–132, K144, and K153 contribute to the NAD(+) site; these read GVIGD and TS. The Zn(2+) site is built by E186, H251, and H268.

It belongs to the sugar phosphate cyclases superfamily. Dehydroquinate synthase family. Co(2+) serves as cofactor. Zn(2+) is required as a cofactor. The cofactor is NAD(+).

The protein localises to the cytoplasm. The enzyme catalyses 7-phospho-2-dehydro-3-deoxy-D-arabino-heptonate = 3-dehydroquinate + phosphate. Its pathway is metabolic intermediate biosynthesis; chorismate biosynthesis; chorismate from D-erythrose 4-phosphate and phosphoenolpyruvate: step 2/7. Catalyzes the conversion of 3-deoxy-D-arabino-heptulosonate 7-phosphate (DAHP) to dehydroquinate (DHQ). The polypeptide is 3-dehydroquinate synthase (Rippkaea orientalis (strain PCC 8801 / RF-1) (Cyanothece sp. (strain PCC 8801))).